Here is a 625-residue protein sequence, read N- to C-terminus: Archaeosine synthase subunit alpha (625 aa).

Residues 556-624 enclose the PUA domain; that stretch reads KYVVKIDDFV…VAVDVRHVKK (69 aa).

Belongs to the archaeosine synthase type 1 family. Forms a robust complex with the archaeosine synthase beta subunit RaSEA. Formation of this complex highly increases lysine transfer activity. The complex likely consists of an alpha(2)beta(2) heterotetrameric structure.

The enzyme catalyses 7-cyano-7-carbaguanosine(15) in tRNA + L-lysine = 7-N-[(5S)-5-amino-5-carboxypentyl]formamidino-7-deazaguanosine(15) in tRNA. It functions in the pathway tRNA modification; archaeosine-tRNA biosynthesis. Its function is as follows. Functions in the biosynthesis of archaeosine, a modified nucleoside present in the dihydrouridine loop (D-loop) of archaeal tRNAs. Catalyzes the addition of L-lysine to the cyano group of 7-cyano-7-deazaguanine (preQ0)-modified tRNAs at position 15, to generate q0kN15-tRNA, a q0N lysine adduct identified as 7-N-[(5S)-5-amino-5-carboxypentyl]formamidino-7-deazaguanosine. The sequence is that of Archaeosine synthase subunit alpha from Methanosarcina acetivorans (strain ATCC 35395 / DSM 2834 / JCM 12185 / C2A).